The following is a 330-amino-acid chain: DNA-directed RNA polymerase subunit alpha (330 aa).

The tract at residues 1-236 is alpha N-terminal domain (alpha-NTD); that stretch reads MQGSVTEFLK…EQLDAFVDLR (236 aa). Positions 250–330 are alpha C-terminal domain (alpha-CTD); the sequence is FDPILLRPVD…NWPPASIAED (81 aa).

The protein belongs to the RNA polymerase alpha chain family. In terms of assembly, homodimer. The RNAP catalytic core consists of 2 alpha, 1 beta, 1 beta' and 1 omega subunit. When a sigma factor is associated with the core the holoenzyme is formed, which can initiate transcription.

It carries out the reaction RNA(n) + a ribonucleoside 5'-triphosphate = RNA(n+1) + diphosphate. Its function is as follows. DNA-dependent RNA polymerase catalyzes the transcription of DNA into RNA using the four ribonucleoside triphosphates as substrates. The chain is DNA-directed RNA polymerase subunit alpha from Vibrio parahaemolyticus serotype O3:K6 (strain RIMD 2210633).